The following is a 461-amino-acid chain: Argininosuccinate lyase (461 aa).

The protein belongs to the lyase 1 family. Argininosuccinate lyase subfamily.

The protein resides in the cytoplasm. It carries out the reaction 2-(N(omega)-L-arginino)succinate = fumarate + L-arginine. It functions in the pathway amino-acid biosynthesis; L-arginine biosynthesis; L-arginine from L-ornithine and carbamoyl phosphate: step 3/3. Its activity is regulated as follows. Strongly inhibited by L-arginine. Inhibitory effects are lowered at pH 7.0 compared to those at pH 8.0. At 45 degrees Celsius and pH 8.0, activity decreases to 94%, 74% and 37% in the presence of 0.6 mM, 2.8 mM and 10 mM arginine, respectively. Activity also decreases to 86% in the presence of 10 mM sodium succinate or sodium citrate. Activity does not decrease in the presence of 1 mM or 10 mM L-lysine, which has a similar structure to arginine. Functionally, catalyzes the last step of arginine biosynthesis, the conversion of argininosuccinate into L-arginine and fumarate. The sequence is that of Argininosuccinate lyase from Synechocystis sp. (strain ATCC 27184 / PCC 6803 / Kazusa).